We begin with the raw amino-acid sequence, 986 residues long: Ephrin type-A receptor 4 (986 aa).

Residues 1-19 (MAGIFYFILFSFLFGICDA) form the signal peptide. Topologically, residues 20 to 547 (VTGSRVYPAN…RIIGDGANST (528 aa)) are extracellular. Positions 30–209 (EVTLLDSRSV…FYKKCPLTVR (180 aa)) constitute an Eph LBD domain. N235, N340, and N408 each carry an N-linked (GlcNAc...) asparagine glycan. 2 Fibronectin type-III domains span residues 328 to 439 (PPSA…TNQA) and 440 to 537 (APSS…TVPS). The helical transmembrane segment at 548–569 (VLLVSVSGSVVLVVILIAAFVI) threads the bilayer. Residues 570–986 (SRRRSKYSKA…QQMHGRMVPV (417 aa)) are Cytoplasmic-facing. Phosphotyrosine; by autocatalysis is present on residues Y596 and Y602. The region spanning 621–882 (IKIEKVIGVG…QIVNMLDKLI (262 aa)) is the Protein kinase domain. ATP is bound by residues 627–635 (IGVGEFGEV) and K653. The active-site Proton acceptor is the D746. 2 positions are modified to phosphotyrosine; by autocatalysis: Y779 and Y928. Residues 911 to 975 (SAVVSVGDWL…LSSVQAMRTQ (65 aa)) enclose the SAM domain. The short motif at 984-986 (VPV) is the PDZ-binding element.

It belongs to the protein kinase superfamily. Tyr protein kinase family. Ephrin receptor subfamily. In terms of assembly, heterotetramer upon binding of the ligand. The heterotetramer is composed of an ephrin dimer and a receptor dimer. Oligomerization is probably required to induce biological responses. Interacts (phosphorylated at position Tyr-602) with FYN. Interacts (via PDZ motif) with SIPA1L1 (via PDZ domain); controls neuronal morphology through regulation of the RAP1 (RAP1A or RAP1B) and RAP2 (RAP2A, RAP2B or RAP2C) GTPases. Interacts with CDK5, CDK5R1 and NGEF; upon activation by EFNA1 induces NGEF phosphorylation by the kinase CDK5. Interacts with CHN1; effector of EPHA4 in axon guidance linking EPHA4 activation to RAC1 regulation. Forms a ternary complex composed of ADAM10, CADH1 and EPHA4; within the complex, CADH1 is cleaved by ADAM10 which disrupts adherens junctions. Expressed in inner and outer pillar cells of the organ of Corti (at protein level). Highest expression in the adult brain and retina and also detectable in kidney, lung, skeletal muscle and thymus. Not detected in heart and liver. Expressed in myogenic progenitor cells.

Its subcellular location is the cell membrane. It localises to the cell projection. It is found in the axon. The protein localises to the dendrite. The protein resides in the postsynaptic density membrane. Its subcellular location is the early endosome. It localises to the cell junction. It is found in the adherens junction. The catalysed reaction is L-tyrosyl-[protein] + ATP = O-phospho-L-tyrosyl-[protein] + ADP + H(+). Its function is as follows. Receptor tyrosine kinase which binds membrane-bound ephrin family ligands residing on adjacent cells, leading to contact-dependent bidirectional signaling into neighboring cells. The signaling pathway downstream of the receptor is referred to as forward signaling while the signaling pathway downstream of the ephrin ligand is referred to as reverse signaling. Highly promiscuous, it has the unique property among Eph receptors to bind and to be physiologically activated by both GPI-anchored ephrin-A and transmembrane ephrin-B ligands including EFNA1 and EFNB3. Upon activation by ephrin ligands, modulates cell morphology and integrin-dependent cell adhesion through regulation of the Rac, Rap and Rho GTPases activity. Plays an important role in the development of the nervous system controlling different steps of axonal guidance including the establishment of the corticospinal projections. May also control the segregation of motor and sensory axons during neuromuscular circuit developmen. In addition to its role in axonal guidance plays a role in synaptic plasticity. Activated by EFNA1 phosphorylates CDK5 at 'Tyr-15' which in turn phosphorylates NGEF regulating RHOA and dendritic spine morphogenesis. In the nervous system, also plays a role in repair after injury preventing axonal regeneration and in angiogenesis playing a role in central nervous system vascular formation. Additionally, its promiscuity makes it available to participate in a variety of cell-cell signaling regulating for instance the development of the thymic epithelium. During development of the cochlear organ of Corti, regulates pillar cell separation by forming a ternary complex with ADAM10 and CADH1 which facilitates the cleavage of CADH1 by ADAM10 and disruption of adherens junctions. Phosphorylates CAPRIN1, promoting CAPRIN1-dependent formation of a membraneless compartment. The polypeptide is Ephrin type-A receptor 4 (Epha4) (Mus musculus (Mouse)).